The sequence spans 130 residues: Small ribosomal subunit protein uS8 (130 aa).

Belongs to the universal ribosomal protein uS8 family. Part of the 30S ribosomal subunit. Contacts proteins S5 and S12.

Its function is as follows. One of the primary rRNA binding proteins, it binds directly to 16S rRNA central domain where it helps coordinate assembly of the platform of the 30S subunit. This chain is Small ribosomal subunit protein uS8, found in Shewanella baltica (strain OS223).